The following is a 218-amino-acid chain: Small ribosomal subunit protein uS3c (218 aa).

Residues 47–118 enclose the KH type-2 domain; it reads VQKQIKNSSN…KIQITLKNVL (72 aa).

The protein belongs to the universal ribosomal protein uS3 family. Part of the 30S ribosomal subunit.

It is found in the plastid. The protein localises to the chloroplast. This is Small ribosomal subunit protein uS3c (rps3) from Angiopteris evecta (Mule's foot fern).